The primary structure comprises 147 residues: 3-dehydroquinate dehydratase (147 aa).

Tyrosine 23 acts as the Proton acceptor in catalysis. Positions 74, 80, and 87 each coordinate substrate. Histidine 100 (proton donor) is an active-site residue. Substrate contacts are provided by residues 101-102 (LS) and arginine 111.

It belongs to the type-II 3-dehydroquinase family. As to quaternary structure, homododecamer.

It carries out the reaction 3-dehydroquinate = 3-dehydroshikimate + H2O. Its pathway is metabolic intermediate biosynthesis; chorismate biosynthesis; chorismate from D-erythrose 4-phosphate and phosphoenolpyruvate: step 3/7. Catalyzes a trans-dehydration via an enolate intermediate. This chain is 3-dehydroquinate dehydratase, found in Glaesserella parasuis serovar 5 (strain SH0165) (Haemophilus parasuis).